The following is a 494-amino-acid chain: Amidophosphoribosyltransferase (494 aa).

Positions M1–E10 are excised as a propeptide. The active-site Nucleophile is the C11. The Glutamine amidotransferase type-2 domain maps to C11–K231. Residues S294, D356, and D357 each contribute to the Mg(2+) site.

It in the C-terminal section; belongs to the purine/pyrimidine phosphoribosyltransferase family. Requires Mg(2+) as cofactor.

It carries out the reaction 5-phospho-beta-D-ribosylamine + L-glutamate + diphosphate = 5-phospho-alpha-D-ribose 1-diphosphate + L-glutamine + H2O. It functions in the pathway purine metabolism; IMP biosynthesis via de novo pathway; N(1)-(5-phospho-D-ribosyl)glycinamide from 5-phospho-alpha-D-ribose 1-diphosphate: step 1/2. Its function is as follows. Catalyzes the formation of phosphoribosylamine from phosphoribosylpyrophosphate (PRPP) and glutamine. The chain is Amidophosphoribosyltransferase from Staphylococcus aureus (strain MRSA252).